A 115-amino-acid chain; its full sequence is Immunoglobulin kappa chain variable 12-41 (115 aa).

Residues 1 to 20 (MSVLTQVLALLLLWLTGARC) form the signal peptide. The interval 21 to 43 (DIQMTQSPASLSASVGETVTITC) is framework-1. A disulfide bridge links Cys-43 with Cys-108. The segment at 44 to 54 (RASGNIHNYLA) is complementarity-determining-1. Residues 55–69 (WYQQKQGKSPQLLVY) form a framework-2 region. Residues 70–76 (NAKTLAD) are complementarity-determining-2. Residues 77 to 108 (GVPSRFSGSGSGTQYSLKINSLQPEDFGSYYC) are framework-3. Positions 109–115 (QHFWSTP) are complementarity-determining-3.

The chain is Immunoglobulin kappa chain variable 12-41 from Mus musculus (Mouse).